We begin with the raw amino-acid sequence, 350 residues long: Ion-translocating oxidoreductase complex subunit D (350 aa).

3 consecutive transmembrane segments (helical) span residues 20-39, 89-109, and 123-143; these read IMML…WYFF, IPPL…VIIA, and PAMI…TNWL. At T187 the chain carries FMN phosphoryl threonine. 5 helical membrane-spanning segments follow: residues 215-235, 244-264, 267-287, 301-321, and 322-342; these read LAGL…LFLL, IPVS…LIAP, FLSP…FFIL, LVFG…GGYP, and DGVA…DYYT.

This sequence belongs to the NqrB/RnfD family. The complex is composed of six subunits: RnfA, RnfB, RnfC, RnfD, RnfE and RnfG. FMN serves as cofactor.

Its subcellular location is the cell inner membrane. Part of a membrane-bound complex that couples electron transfer with translocation of ions across the membrane. This is Ion-translocating oxidoreductase complex subunit D from Cronobacter sakazakii (strain ATCC BAA-894) (Enterobacter sakazakii).